A 201-amino-acid chain; its full sequence is Small ribosomal subunit protein uS4c (201 aa).

The segment at 15-43 (LGALPGLTRKTPKSGSNQKKKFHSGKKEQ) is disordered. Residues 89–150 (MRLDNILFRL…NQRSKRLVQN (62 aa)) enclose the S4 RNA-binding domain.

Belongs to the universal ribosomal protein uS4 family. As to quaternary structure, part of the 30S ribosomal subunit. Contacts protein S5. The interaction surface between S4 and S5 is involved in control of translational fidelity.

Its subcellular location is the plastid. The protein localises to the chloroplast. Functionally, one of the primary rRNA binding proteins, it binds directly to 16S rRNA where it nucleates assembly of the body of the 30S subunit. Its function is as follows. With S5 and S12 plays an important role in translational accuracy. The chain is Small ribosomal subunit protein uS4c (rps4) from Sorghum bicolor (Sorghum).